A 461-amino-acid chain; its full sequence is Protein DVR-1 homolog (461 aa).

Residues methionine 1–serine 30 form the signal peptide. A propeptide spanning residues tryptophan 31–lysine 338 is cleaved from the precursor. Asparagine 149 is a glycosylation site (N-linked (GlcNAc...) asparagine). The segment at serine 317–alanine 351 is disordered. A compositionally biased stretch (basic residues) spans histidine 318–arginine 337. Residues lysine 338 to serine 347 show a composition bias toward basic and acidic residues. 3 cysteine pairs are disulfide-bonded: cysteine 360–cysteine 426, cysteine 389–cysteine 458, and cysteine 393–cysteine 460. Asparagine 402 carries N-linked (GlcNAc...) asparagine glycosylation.

It belongs to the TGF-beta family. Homodimer; disulfide-linked.

It is found in the secreted. This Strongylocentrotus purpuratus (Purple sea urchin) protein is Protein DVR-1 homolog (DVR1).